We begin with the raw amino-acid sequence, 78 residues long: Putative Fe(2+) transport protein A (78 aa).

Belongs to the FeoA family.

Its function is as follows. Might be involved in Fe(2+) ion uptake. The chain is Putative Fe(2+) transport protein A from Helicobacter pylori (strain J99 / ATCC 700824) (Campylobacter pylori J99).